The chain runs to 363 residues: 3-dehydroquinate synthase (363 aa).

Residues 103 to 107 (GAVGD), 127 to 128 (TT), Lys-139, Lys-148, and 166 to 169 (FSET) contribute to the NAD(+) site. Residues Glu-181, His-243, and His-260 each contribute to the Zn(2+) site.

This sequence belongs to the sugar phosphate cyclases superfamily. Dehydroquinate synthase family. Requires Co(2+) as cofactor. It depends on Zn(2+) as a cofactor. NAD(+) serves as cofactor.

It localises to the cytoplasm. It carries out the reaction 7-phospho-2-dehydro-3-deoxy-D-arabino-heptonate = 3-dehydroquinate + phosphate. The protein operates within metabolic intermediate biosynthesis; chorismate biosynthesis; chorismate from D-erythrose 4-phosphate and phosphoenolpyruvate: step 2/7. Functionally, catalyzes the conversion of 3-deoxy-D-arabino-heptulosonate 7-phosphate (DAHP) to dehydroquinate (DHQ). This is 3-dehydroquinate synthase from Lysinibacillus sphaericus (strain C3-41).